The primary structure comprises 236 residues: MTRRYWNINLEEMMEAGVHFGHGTRKWNPRMAPYISAKRKGIHIINLTRTARFLSEACDLVFDAARRGKRFLIVGTKNKVVDLVASAAIRARCHYVNKKWLGGMSTNWSTTETRLHKFRDLRAEQKAGRLNHLPKRDAAMLKRQLSHLETYLGGIKYMTGLPDIVIIVDQQEEYTALRECVTLGIPTICLIDTNCDPDLADISIPANDDAIASIRLVLNKLVSAICEGRSSYIRNH.

Belongs to the universal ribosomal protein uS2 family.

Its subcellular location is the plastid. The protein localises to the chloroplast. This is Small ribosomal subunit protein uS2c (rps2) from Platanus occidentalis (Sycamore).